We begin with the raw amino-acid sequence, 428 residues long: Tyrosine--tRNA ligase (428 aa).

Tyr-37 serves as a coordination point for L-tyrosine. Positions Pro-42–His-51 match the 'HIGH' region motif. L-tyrosine contacts are provided by Tyr-175 and Gln-179. Residues Lys-235 to Ser-239 carry the 'KMSKS' region motif. Residue Lys-238 coordinates ATP. Residues Ala-358–Gly-415 enclose the S4 RNA-binding domain.

The protein belongs to the class-I aminoacyl-tRNA synthetase family. TyrS type 1 subfamily. In terms of assembly, homodimer.

It localises to the cytoplasm. The enzyme catalyses tRNA(Tyr) + L-tyrosine + ATP = L-tyrosyl-tRNA(Tyr) + AMP + diphosphate + H(+). Functionally, catalyzes the attachment of tyrosine to tRNA(Tyr) in a two-step reaction: tyrosine is first activated by ATP to form Tyr-AMP and then transferred to the acceptor end of tRNA(Tyr). The polypeptide is Tyrosine--tRNA ligase (Corynebacterium jeikeium (strain K411)).